The primary structure comprises 3424 residues: Genome polyprotein (3424 aa).

An interaction with host EXOC1 region spans residues 2-15; that stretch reads SKKPGKSAAKRTVN. The Cytoplasmic segment spans residues 2–101; that stretch reads SKKPGKSAAK…SVNKRKEKKK (100 aa). Residues 35-70 form a hydrophobic; homodimerization of capsid protein C region; the sequence is MLDVRGAPRLILALMAFFRFAAIKPTLGLKKRWRSV. Positions 102–118 are cleaved as a propeptide — ER anchor for the capsid protein C, removed in mature form by serine protease NS3; the sequence is SFSTALLWITMITAVAG. The helical transmembrane segment at 102–122 threads the bilayer; the sequence is SFSTALLWITMITAVAGLKIS. Over 123–244 the chain is Extracellular; sequence SHRDRPLLMV…TTKYLTKVEN (122 aa). N133 carries an N-linked (GlcNAc...) asparagine; by host glycan. Residues 245–265 form a helical membrane-spanning segment; that stretch reads WVIRNPGYALVALATAWMLGS. Over 266–270 the chain is Cytoplasmic; the sequence is NTPQR. The chain crosses the membrane as a helical span at residues 271-285; it reads VVFMIMMMLIAPAYS. Residues 286–738 lie on the Extracellular side of the membrane; that stretch reads LNCLGISNRD…GVFGTAFRSL (453 aa). 8 disulfide bridges follow: C288–C315, C345–C401, C345–C406, C359–C390, C377–C401, C377–C406, C475–C573, and C590–C621. The tract at residues 383-396 is fusion peptide; that stretch reads DRGWGNGCGLFGKG. The helical transmembrane segment at 739–759 threads the bilayer; sequence FGGMSWVTQALMGALLLWLGI. The Cytoplasmic segment spans residues 760-765; the sequence is SARERT. The chain crosses the membrane as a helical span at residues 766-786; the sequence is VSLIMLSVGGILLFLAVNVHA. Residues 787–1170 lie on the Extracellular side of the membrane; it reads DTGCAIDMAR…EVLRRRWTAN (384 aa). 8 disulfides stabilise this stretch: C790–C801, C841–C929, C965–C1009, C1067–C1116, C1078–C1099, C1078–C1100, C1099–C1103, and C1100–C1103. N-linked (GlcNAc...) asparagine; by host glycans are attached at residues N916 and N993. A helical membrane pass occupies residues 1171–1191; the sequence is LALPTSALLMACFIFGGFTYL. Residues 1192–1213 lie on the Cytoplasmic side of the membrane; it reads DLFRYFILVGAAFAEANSGGDV. A helical membrane pass occupies residues 1214 to 1234; it reads VHLAMIAAFNIQPVALVTTFF. Residues 1235–1276 are Lumenal-facing; that stretch reads RKNWTNRENMILIIAAACTQMACMELKIELFHVMNSLSLAWM. A helical membrane pass occupies residues 1277-1297; the sequence is ILKALTTGTTSTLAMPFLAAL. Residues 1298–1302 are Cytoplasmic-facing; sequence SPPMN. The helical transmembrane segment at 1303–1323 threads the bilayer; it reads WLGLDVVRCLLIMAGVAALIS. The Lumenal segment spans residues 1324-1333; that stretch reads ERRESLAKKK. The helical transmembrane segment at 1334–1354 threads the bilayer; that stretch reads GALLISAALALTGAFSPLVLQ. Topologically, residues 1355–1367 are cytoplasmic; sequence GALMFTQSLGKRG. The helical transmembrane segment at 1368 to 1388 threads the bilayer; that stretch reads WPASEVLTAVGMTFALAGSVA. The Lumenal segment spans residues 1389-1391; it reads RLD. A helical transmembrane segment spans residues 1392-1412; sequence GGTMAIPLATMAILAVAYVLS. The Cytoplasmic segment spans residues 1413–1469; the sequence is GKSTDMWLERCADISWINEAEITGTSPRLDVELDSNGDFKMINDPGVPMWMWTCRMG. An interacts with and activates NS3 protease region spans residues 1420 to 1459; the sequence is LERCADISWINEAEITGTSPRLDVELDSNGDFKMINDPGV. Residues 1470–1490 constitute an intramembrane region (helical); the sequence is LMAMAAYNPVLIPVSMAGYWM. The Cytoplasmic portion of the chain corresponds to 1491–2167; sequence TVKIHKRGGV…ALEELPDTVE (677 aa). The Peptidase S7 domain occupies 1498 to 1675; that stretch reads GGVMWDVPAP…ERQEEETPEA (178 aa). Residues H1548, D1572, and S1632 each act as charge relay system; for serine protease NS3 activity in the active site. The Helicase ATP-binding domain occupies 1678–1834; sequence PDMLKKRRLT…DSNAPIIDQE (157 aa). Residues 1682–1685 are important for RNA-binding; the sequence is KKRR. 1691–1698 provides a ligand contact to ATP; that stretch reads LHPGAGKT. A DEAH box motif is present at residues 1782-1785; sequence DEAH. Positions 1845 to 2009 constitute a Helicase C-terminal domain; sequence GFEWITEYTG…GLVAQLYGPE (165 aa). Position 1886 is an N6-acetyllysine; by host (K1886). The disordered stretch occupies residues 1944–1969; it reads APITPASAAQRRGRIGRDPTQSGDEY. The tract at residues 2160-2164 is regulates the ATPase activity of NS3 helicase; that stretch reads EELPD. Residues 2168-2188 traverse the membrane as a helical segment; sequence TILLMTMMCVASLGMFTLMVH. Residues 2189-2190 lie on the Lumenal side of the membrane; the sequence is RR. An intramembrane region (helical) is located at residues 2191 to 2211; that stretch reads GLGKTGLGTLVLATVTVLLWI. Over 2212 to 2213 the chain is Lumenal; the sequence is SD. Residues 2214–2234 traverse the membrane as a helical segment; it reads VPAPKIAGVLLIAFLLMIVLI. Residues 2235–2249 are Cytoplasmic-facing; the sequence is PEPEKQRSQTDNHLA. A helical membrane pass occupies residues 2250-2264; it reads IFLVCVLLLIGAVSA. Over 2265–2299 the chain is Lumenal; sequence NEMGWLETTKKDIGKLFRSSGDTQEQSTWQSWAPE. The segment at residues 2300–2320 is an intramembrane region (helical); sequence VRAATAWAGYAGLTVFLTPLF. The Lumenal portion of the chain corresponds to 2321–2342; that stretch reads RHLITTQYVSFSLTAITAQASA. The helical transmembrane segment at 2343–2363 threads the bilayer; sequence LFGLSAGYPFVGIDLAVGFLL. The Cytoplasmic portion of the chain corresponds to 2364–2371; it reads LGCYGQYN. A helical membrane pass occupies residues 2372–2392; that stretch reads LPTAVATGLLLLAHYGYMIPG. Residues 2393–2439 lie on the Lumenal side of the membrane; sequence WQAEAMRAAQKRTAAGVMKNAVVDGIVATDIPEVDTATPITEKKLGQ. A helical transmembrane segment spans residues 2440–2460; that stretch reads ILLILLCGASLLVKFDTMVLV. Residues 2461–3424 lie on the Cytoplasmic side of the membrane; that stretch reads EAGVLTTSAM…PSPVLFTGAI (964 aa). The mRNA cap 0-1 NS5-type MT domain maps to 2520-2784; it reads GGGSAPTLGE…DVCLGSGTRA (265 aa). S2575 contributes to the S-adenosyl-L-methionine binding site. S2575 bears the Phosphoserine mark. The active-site For 2'-O-MTase activity is the K2580. S-adenosyl-L-methionine contacts are provided by G2605, W2606, T2623, K2624, D2650, and V2651. D2665 serves as the catalytic For 2'-O-MTase activity. I2666 lines the S-adenosyl-L-methionine pocket. Catalysis depends on for 2'-O-MTase activity residues K2700 and E2736. An S-adenosyl-L-methionine-binding site is contributed by Y2738. Zn(2+)-binding residues include E2958, H2962, C2967, and C2970. One can recognise a RdRp catalytic domain in the interval 3048–3200; sequence GNMFADDTAG…KPIDDRFASA (153 aa). H3235, C3251, and C3370 together coordinate Zn(2+).

It in the N-terminal section; belongs to the class I-like SAM-binding methyltransferase superfamily. mRNA cap 0-1 NS5-type methyltransferase family. In terms of assembly, homodimer. Interacts (via N-terminus) with host EXOC1 (via C-terminus); this interaction results in EXOC1 degradation through the proteasome degradation pathway. As to quaternary structure, forms heterodimers with envelope protein E in the endoplasmic reticulum and Golgi. Homodimer; in the endoplasmic reticulum and Golgi. Interacts with protein prM. Interacts with non-structural protein 1. In terms of assembly, homodimer; Homohexamer when secreted. Interacts with envelope protein E. NS1 interacts with NS4B. Interacts with host complement protein CFH; this interaction leads to the degradation of C3. As to quaternary structure, interacts (via N-terminus) with serine protease NS3. Forms a heterodimer with serine protease NS3. May form homooligomers. In terms of assembly, forms a heterodimer with NS2B. Interacts with non-structural protein 2A (via N-terminus). Interacts with NS4B. Interacts with unphosphorylated RNA-directed RNA polymerase NS5; this interaction stimulates RNA-directed RNA polymerase NS5 guanylyltransferase activity. As to quaternary structure, interacts with serine protease NS3. Homodimer. Interacts with host STAT2; this interaction inhibits the phosphorylation of the latter, and, when all viral proteins are present (polyprotein), targets STAT2 for degradation. Interacts with serine protease NS3. Post-translationally, specific enzymatic cleavages in vivo yield mature proteins. Cleavages in the lumen of endoplasmic reticulum are performed by host signal peptidase, whereas cleavages in the cytoplasmic side are performed by serine protease NS3. Signal cleavage at the 2K-4B site requires a prior NS3 protease-mediated cleavage at the 4A-2K site. In terms of processing, cleaved in post-Golgi vesicles by a host furin, releasing the mature small envelope protein M, and peptide pr. This cleavage is incomplete as up to 30% of viral particles still carry uncleaved prM. N-glycosylated. Post-translationally, N-glycosylated. The excreted form is glycosylated and this is required for efficient secretion of the protein from infected cells. In terms of processing, acetylated by host KAT5. Acetylation modulates NS3 RNA-binding and unwinding activities and plays an important positive role for viral replication. Phosphorylated on serines residues. This phosphorylation may trigger NS5 nuclear localization.

Its subcellular location is the virion. The protein resides in the host nucleus. It is found in the host cytoplasm. It localises to the host perinuclear region. The protein localises to the secreted. Its subcellular location is the virion membrane. The protein resides in the host endoplasmic reticulum membrane. The enzyme catalyses Selective hydrolysis of -Xaa-Xaa-|-Yaa- bonds in which each of the Xaa can be either Arg or Lys and Yaa can be either Ser or Ala.. It carries out the reaction RNA(n) + a ribonucleoside 5'-triphosphate = RNA(n+1) + diphosphate. It catalyses the reaction a ribonucleoside 5'-triphosphate + H2O = a ribonucleoside 5'-diphosphate + phosphate + H(+). The catalysed reaction is ATP + H2O = ADP + phosphate + H(+). The enzyme catalyses a 5'-end (5'-triphosphoguanosine)-ribonucleoside in mRNA + S-adenosyl-L-methionine = a 5'-end (N(7)-methyl 5'-triphosphoguanosine)-ribonucleoside in mRNA + S-adenosyl-L-homocysteine. It carries out the reaction a 5'-end (N(7)-methyl 5'-triphosphoguanosine)-ribonucleoside in mRNA + S-adenosyl-L-methionine = a 5'-end (N(7)-methyl 5'-triphosphoguanosine)-(2'-O-methyl-ribonucleoside) in mRNA + S-adenosyl-L-homocysteine + H(+). Functionally, plays a role in virus budding by binding to the cell membrane and gathering the viral RNA into a nucleocapsid that forms the core of a mature virus particle. During virus entry, may induce genome penetration into the host cytoplasm after hemifusion induced by the surface proteins. Can migrate to the cell nucleus where it modulates host functions. Overcomes the anti-viral effects of host EXOC1 by sequestering and degrading the latter through the proteasome degradation pathway. Its function is as follows. Inhibits RNA silencing by interfering with host Dicer. Prevents premature fusion activity of envelope proteins in trans-Golgi by binding to envelope protein E at pH6.0. After virion release in extracellular space, gets dissociated from E dimers. In terms of biological role, acts as a chaperone for envelope protein E during intracellular virion assembly by masking and inactivating envelope protein E fusion peptide. prM is the only viral peptide matured by host furin in the trans-Golgi network probably to avoid catastrophic activation of the viral fusion activity in acidic Golgi compartment prior to virion release. prM-E cleavage is inefficient, and many virions are only partially matured. These uncleaved prM would play a role in immune evasion. Functionally, may play a role in virus budding. Exerts cytotoxic effects by activating a mitochondrial apoptotic pathway through M ectodomain. May display a viroporin activity. Its function is as follows. Binds to host cell surface receptor and mediates fusion between viral and cellular membranes. Envelope protein is synthesized in the endoplasmic reticulum in the form of heterodimer with protein prM. They play a role in virion budding in the ER, and the newly formed immature particle is covered with 60 spikes composed of heterodimer between precursor prM and envelope protein E. The virion is transported to the Golgi apparatus where the low pH causes dissociation of PrM-E heterodimers and formation of E homodimers. prM-E cleavage is inefficient, and many virions are only partially matured. These uncleaved prM would play a role in immune evasion. Involved in immune evasion, pathogenesis and viral replication. Once cleaved off the polyprotein, is targeted to three destinations: the viral replication cycle, the plasma membrane and the extracellular compartment. Essential for viral replication. Required for formation of the replication complex and recruitment of other non-structural proteins to the ER-derived membrane structures. Excreted as a hexameric lipoparticle that plays a role against host immune response. Antagonizing the complement function. Binds to the host macrophages and dendritic cells. Inhibits signal transduction originating from Toll-like receptor 3 (TLR3). In terms of biological role, component of the viral RNA replication complex that functions in virion assembly and antagonizes the host alpha/beta interferon antiviral response. Functionally, required cofactor for the serine protease function of NS3. May have membrane-destabilizing activity and form viroporins. Its function is as follows. Displays three enzymatic activities: serine protease, NTPase and RNA helicase. NS3 serine protease, in association with NS2B, performs its autocleavage and cleaves the polyprotein at dibasic sites in the cytoplasm: C-prM, NS2A-NS2B, NS2B-NS3, NS3-NS4A, NS4A-2K and NS4B-NS5. NS3 RNA helicase binds RNA and unwinds dsRNA in the 3' to 5' direction. Regulates the ATPase activity of the NS3 helicase activity. NS4A allows NS3 helicase to conserve energy during unwinding. In terms of biological role, functions as a signal peptide for NS4B and is required for the interferon antagonism activity of the latter. Functionally, induces the formation of ER-derived membrane vesicles where the viral replication takes place. Inhibits interferon (IFN)-induced host STAT1 phosphorylation and nuclear translocation, thereby preventing the establishment of cellular antiviral state by blocking the IFN-alpha/beta pathway. Inhibits STAT2 translocation in the nucleus after IFN-alpha treatment. Its function is as follows. Replicates the viral (+) and (-) RNA genome, and performs the capping of genomes in the cytoplasm. NS5 methylates viral RNA cap at guanine N-7 and ribose 2'-O positions. Besides its role in RNA genome replication, also prevents the establishment of cellular antiviral state by blocking the interferon-alpha/beta (IFN-alpha/beta) signaling pathway. Inhibits host TYK2 and STAT2 phosphorylation, thereby preventing activation of JAK-STAT signaling pathway. The sequence is that of Genome polyprotein from Aedes sp. (Human).